The primary structure comprises 403 residues: Phosphopentomutase (403 aa).

Residues Asp13, Asp298, His303, Asp339, His340, and His351 each coordinate Mn(2+).

The protein belongs to the phosphopentomutase family. Mn(2+) is required as a cofactor.

The protein localises to the cytoplasm. The catalysed reaction is 2-deoxy-alpha-D-ribose 1-phosphate = 2-deoxy-D-ribose 5-phosphate. It carries out the reaction alpha-D-ribose 1-phosphate = D-ribose 5-phosphate. The protein operates within carbohydrate degradation; 2-deoxy-D-ribose 1-phosphate degradation; D-glyceraldehyde 3-phosphate and acetaldehyde from 2-deoxy-alpha-D-ribose 1-phosphate: step 1/2. Isomerase that catalyzes the conversion of deoxy-ribose 1-phosphate (dRib-1-P) and ribose 1-phosphate (Rib-1-P) to deoxy-ribose 5-phosphate (dRib-5-P) and ribose 5-phosphate (Rib-5-P), respectively. This is Phosphopentomutase from Streptococcus thermophilus (strain ATCC BAA-250 / LMG 18311).